A 420-amino-acid polypeptide reads, in one-letter code: Proteasome-activating nucleotidase (420 aa).

The segment at 1–25 (MRSHLVKPGSVYDGIEPGELGETTE) is disordered. Residues 22-79 (ETTESVQDRVRQLESRNSFLEEQCSQIESEKRYLENQKIKYEREIRKLQSELDRMKTS) adopt a coiled-coil conformation. ATP contacts are provided by residues 203-208 (GTGKTL) and H342. Positions 418–420 (MFV) are docks into pockets in the proteasome alpha-ring to cause gate opening.

The protein belongs to the AAA ATPase family. As to quaternary structure, homohexamer. The hexameric complex has a two-ring architecture resembling a top hat that caps the 20S proteasome core at one or both ends. Upon ATP-binding, the C-terminus of PAN interacts with the alpha-rings of the proteasome core by binding to the intersubunit pockets.

It is found in the cytoplasm. Its function is as follows. ATPase which is responsible for recognizing, binding, unfolding and translocation of substrate proteins into the archaeal 20S proteasome core particle. Is essential for opening the gate of the 20S proteasome via an interaction with its C-terminus, thereby allowing substrate entry and access to the site of proteolysis. Thus, the C-termini of the proteasomal ATPase function like a 'key in a lock' to induce gate opening and therefore regulate proteolysis. Unfolding activity requires energy from ATP hydrolysis, whereas ATP binding alone promotes ATPase-20S proteasome association which triggers gate opening, and supports translocation of unfolded substrates. The protein is Proteasome-activating nucleotidase of Methanosarcina mazei (strain ATCC BAA-159 / DSM 3647 / Goe1 / Go1 / JCM 11833 / OCM 88) (Methanosarcina frisia).